The following is a 358-amino-acid chain: MKAAKACIDLSALQHNLQRVKAQAPESKVMAVVKANGYGHGLRHVAKHANHADAFGVARIEEALQLRACGVVKPILLLEGFYSPGDLPVLVTNNIQTVVHCEEQLIALEQADLETPVVVWLKIDSGMHRLGVRPEQYDEFISRLKTCPNVAKPLRYMSHFGCADELDSSITPQQIELFMSLTSGCQGERSLAASAGLLAWPQSQLEWVRPGIIMYGVSPFSDKTAQDLGYQPVMTLKSHLIAVREVKQGESVGYGGIWTSERDTKVGVIAVGYGDGYPRSAPNGTPVWVNGRTVPIAGRVSMDMLTVDLGPDATDKVSDEAILWGKELPVEEVANHIGTIAYELVTKLTPRVEMEYTK.

Catalysis depends on lysine 34, which acts as the Proton acceptor; specific for D-alanine. Residue lysine 34 is modified to N6-(pyridoxal phosphate)lysine. A substrate-binding site is contributed by arginine 129. Tyrosine 254 acts as the Proton acceptor; specific for L-alanine in catalysis. Methionine 302 contacts substrate.

It belongs to the alanine racemase family. Pyridoxal 5'-phosphate serves as cofactor.

The enzyme catalyses L-alanine = D-alanine. It participates in amino-acid biosynthesis; D-alanine biosynthesis; D-alanine from L-alanine: step 1/1. In terms of biological role, catalyzes the interconversion of L-alanine and D-alanine. May also act on other amino acids. This chain is Alanine racemase (alr), found in Vibrio parahaemolyticus serotype O3:K6 (strain RIMD 2210633).